Consider the following 476-residue polypeptide: tRNA-2-methylthio-N(6)-dimethylallyladenosine synthase (476 aa).

The region spanning 5–122 (KKLYIKTWGC…LPEMINQVKG (118 aa)) is the MTTase N-terminal domain. The [4Fe-4S] cluster site is built by Cys-14, Cys-51, Cys-85, Cys-159, Cys-163, and Cys-166. In terms of domain architecture, Radical SAM core spans 145–377 (RAEGPSAFVS…QQRINQQAMS (233 aa)). The TRAM domain maps to 380–443 (RAMLGSVQRI…ANSLRGKVIR (64 aa)).

The protein belongs to the methylthiotransferase family. MiaB subfamily. As to quaternary structure, monomer. [4Fe-4S] cluster serves as cofactor.

It localises to the cytoplasm. The catalysed reaction is N(6)-dimethylallyladenosine(37) in tRNA + (sulfur carrier)-SH + AH2 + 2 S-adenosyl-L-methionine = 2-methylsulfanyl-N(6)-dimethylallyladenosine(37) in tRNA + (sulfur carrier)-H + 5'-deoxyadenosine + L-methionine + A + S-adenosyl-L-homocysteine + 2 H(+). In terms of biological role, catalyzes the methylthiolation of N6-(dimethylallyl)adenosine (i(6)A), leading to the formation of 2-methylthio-N6-(dimethylallyl)adenosine (ms(2)i(6)A) at position 37 in tRNAs that read codons beginning with uridine. This Photorhabdus laumondii subsp. laumondii (strain DSM 15139 / CIP 105565 / TT01) (Photorhabdus luminescens subsp. laumondii) protein is tRNA-2-methylthio-N(6)-dimethylallyladenosine synthase.